Consider the following 86-residue polypeptide: Cytochrome c oxidase subunit 3 (86 aa).

The Mitochondrial matrix segment spans residues 1 to 15 (MAHQAHSYHMVDPSP). Residues 16-34 (WPIFGAAAALLTTSGLVMW) form a helical membrane-spanning segment. Residues 35 to 40 (FHYNSS) are Mitochondrial intermembrane-facing. A helical membrane pass occupies residues 41–66 (ILLAAGLLSMLLVMLQWWREIVREST). The Mitochondrial matrix portion of the chain corresponds to 67–86 (FQGHHTPTVQKGLRYGMILF).

The protein belongs to the cytochrome c oxidase subunit 3 family. As to quaternary structure, component of the cytochrome c oxidase (complex IV, CIV), a multisubunit enzyme composed of 14 subunits. The complex is composed of a catalytic core of 3 subunits MT-CO1, MT-CO2 and MT-CO3, encoded in the mitochondrial DNA, and 11 supernumerary subunits COX4I, COX5A, COX5B, COX6A, COX6B, COX6C, COX7A, COX7B, COX7C, COX8 and NDUFA4, which are encoded in the nuclear genome. The complex exists as a monomer or a dimer and forms supercomplexes (SCs) in the inner mitochondrial membrane with NADH-ubiquinone oxidoreductase (complex I, CI) and ubiquinol-cytochrome c oxidoreductase (cytochrome b-c1 complex, complex III, CIII), resulting in different assemblies (supercomplex SCI(1)III(2)IV(1) and megacomplex MCI(2)III(2)IV(2)).

Its subcellular location is the mitochondrion inner membrane. It carries out the reaction 4 Fe(II)-[cytochrome c] + O2 + 8 H(+)(in) = 4 Fe(III)-[cytochrome c] + 2 H2O + 4 H(+)(out). In terms of biological role, component of the cytochrome c oxidase, the last enzyme in the mitochondrial electron transport chain which drives oxidative phosphorylation. The respiratory chain contains 3 multisubunit complexes succinate dehydrogenase (complex II, CII), ubiquinol-cytochrome c oxidoreductase (cytochrome b-c1 complex, complex III, CIII) and cytochrome c oxidase (complex IV, CIV), that cooperate to transfer electrons derived from NADH and succinate to molecular oxygen, creating an electrochemical gradient over the inner membrane that drives transmembrane transport and the ATP synthase. Cytochrome c oxidase is the component of the respiratory chain that catalyzes the reduction of oxygen to water. Electrons originating from reduced cytochrome c in the intermembrane space (IMS) are transferred via the dinuclear copper A center (CU(A)) of subunit 2 and heme A of subunit 1 to the active site in subunit 1, a binuclear center (BNC) formed by heme A3 and copper B (CU(B)). The BNC reduces molecular oxygen to 2 water molecules using 4 electrons from cytochrome c in the IMS and 4 protons from the mitochondrial matrix. The chain is Cytochrome c oxidase subunit 3 (MT-CO3) from Anas platyrhynchos (Mallard).